The following is a 262-amino-acid chain: Phosphonates import ATP-binding protein PhnC (262 aa).

Residues Ile5–Asn253 enclose the ABC transporter domain. Residue Gly37–Ser44 coordinates ATP.

Belongs to the ABC transporter superfamily. Phosphonates importer (TC 3.A.1.9.1) family. As to quaternary structure, the complex is composed of two ATP-binding proteins (PhnC), two transmembrane proteins (PhnE) and a solute-binding protein (PhnD).

It is found in the cell inner membrane. The enzyme catalyses phosphonate(out) + ATP + H2O = phosphonate(in) + ADP + phosphate + H(+). Functionally, part of the ABC transporter complex PhnCDE involved in phosphonates import. Responsible for energy coupling to the transport system. This Shigella boydii serotype 4 (strain Sb227) protein is Phosphonates import ATP-binding protein PhnC.